The following is a 212-amino-acid chain: Ribosomal RNA large subunit methyltransferase E (212 aa).

S-adenosyl-L-methionine-binding residues include G57, W59, D77, D93, and D122. The Proton acceptor role is filled by K162.

This sequence belongs to the class I-like SAM-binding methyltransferase superfamily. RNA methyltransferase RlmE family.

The protein resides in the cytoplasm. It catalyses the reaction uridine(2552) in 23S rRNA + S-adenosyl-L-methionine = 2'-O-methyluridine(2552) in 23S rRNA + S-adenosyl-L-homocysteine + H(+). In terms of biological role, specifically methylates the uridine in position 2552 of 23S rRNA at the 2'-O position of the ribose in the fully assembled 50S ribosomal subunit. The protein is Ribosomal RNA large subunit methyltransferase E of Coxiella burnetii (strain CbuK_Q154) (Coxiella burnetii (strain Q154)).